Here is a 235-residue protein sequence, read N- to C-terminus: uncharacterized protein (235 aa).

Disordered stretches follow at residues 20-64 (IHPN…LPIK) and 140-164 (SQFF…NFDQ). Low complexity-rich tracts occupy residues 30-60 (NNNN…SNNN) and 140-161 (SQFF…NNKN). A coiled-coil region spans residues 174–213 (KYMEFLSDIEQLNSDLKESKDNLESISIEMVLLETRLKGL).

This is an uncharacterized protein from Dictyostelium discoideum (Social amoeba).